Reading from the N-terminus, the 348-residue chain is Phosphate acyltransferase (348 aa).

Belongs to the PlsX family. As to quaternary structure, homodimer. Probably interacts with PlsY.

The protein resides in the cytoplasm. It carries out the reaction a fatty acyl-[ACP] + phosphate = an acyl phosphate + holo-[ACP]. It functions in the pathway lipid metabolism; phospholipid metabolism. In terms of biological role, catalyzes the reversible formation of acyl-phosphate (acyl-PO(4)) from acyl-[acyl-carrier-protein] (acyl-ACP). This enzyme utilizes acyl-ACP as fatty acyl donor, but not acyl-CoA. The polypeptide is Phosphate acyltransferase (Neisseria gonorrhoeae (strain ATCC 700825 / FA 1090)).